The sequence spans 158 residues: Phosphopantetheine adenylyltransferase (158 aa).

A substrate-binding site is contributed by Thr10. ATP is bound by residues 10 to 11 (TF) and His18. Residues Lys42, Leu74, and Arg88 each coordinate substrate. Residues 89-91 (GLR), Glu99, and 124-130 (NSFISST) contribute to the ATP site.

Belongs to the bacterial CoaD family. Homohexamer. Requires Mg(2+) as cofactor.

The protein resides in the cytoplasm. It carries out the reaction (R)-4'-phosphopantetheine + ATP + H(+) = 3'-dephospho-CoA + diphosphate. It participates in cofactor biosynthesis; coenzyme A biosynthesis; CoA from (R)-pantothenate: step 4/5. In terms of biological role, reversibly transfers an adenylyl group from ATP to 4'-phosphopantetheine, yielding dephospho-CoA (dPCoA) and pyrophosphate. In Shewanella woodyi (strain ATCC 51908 / MS32), this protein is Phosphopantetheine adenylyltransferase.